The primary structure comprises 81 residues: Large ribosomal subunit protein uL24 (81 aa).

Belongs to the universal ribosomal protein uL24 family. In terms of assembly, part of the 50S ribosomal subunit.

Its function is as follows. One of two assembly initiator proteins, it binds directly to the 5'-end of the 23S rRNA, where it nucleates assembly of the 50S subunit. In terms of biological role, one of the proteins that surrounds the polypeptide exit tunnel on the outside of the subunit. This Chloroherpeton thalassium (strain ATCC 35110 / GB-78) protein is Large ribosomal subunit protein uL24.